The following is a 547-amino-acid chain: Chaperonin GroEL (547 aa).

Residues 30 to 33, K51, 87 to 91, G415, and D496 each bind ATP; these read TLGP and DGTTT.

This sequence belongs to the chaperonin (HSP60) family. In terms of assembly, forms a cylinder of 14 subunits composed of two heptameric rings stacked back-to-back. Interacts with the co-chaperonin GroES.

The protein localises to the cytoplasm. The catalysed reaction is ATP + H2O + a folded polypeptide = ADP + phosphate + an unfolded polypeptide.. Functionally, together with its co-chaperonin GroES, plays an essential role in assisting protein folding. The GroEL-GroES system forms a nano-cage that allows encapsulation of the non-native substrate proteins and provides a physical environment optimized to promote and accelerate protein folding. This is Chaperonin GroEL from Histophilus somni (strain 129Pt) (Haemophilus somnus).